Here is an 87-residue protein sequence, read N- to C-terminus: Large ribosomal subunit protein bL31B (87 aa).

The protein belongs to the bacterial ribosomal protein bL31 family. Type B subfamily. Part of the 50S ribosomal subunit.

The chain is Large ribosomal subunit protein bL31B from Burkholderia vietnamiensis (strain G4 / LMG 22486) (Burkholderia cepacia (strain R1808)).